Consider the following 206-residue polypeptide: Ribosomal RNA large subunit methyltransferase E (206 aa).

Residues Gly60, Trp62, Asp80, Asp96, and Asp121 each contribute to the S-adenosyl-L-methionine site. Residue Lys161 is the Proton acceptor of the active site.

Belongs to the class I-like SAM-binding methyltransferase superfamily. RNA methyltransferase RlmE family.

The protein resides in the cytoplasm. The enzyme catalyses uridine(2552) in 23S rRNA + S-adenosyl-L-methionine = 2'-O-methyluridine(2552) in 23S rRNA + S-adenosyl-L-homocysteine + H(+). Functionally, specifically methylates the uridine in position 2552 of 23S rRNA at the 2'-O position of the ribose in the fully assembled 50S ribosomal subunit. The protein is Ribosomal RNA large subunit methyltransferase E of Legionella pneumophila (strain Lens).